Consider the following 549-residue polypeptide: Hydroxylamine reductase (549 aa).

Positions 5, 8, 17, and 23 each coordinate [4Fe-4S] cluster. Hybrid [4Fe-2O-2S] cluster-binding residues include histidine 250, glutamate 274, cysteine 318, cysteine 404, cysteine 432, cysteine 457, glutamate 491, and lysine 493. Cysteine 404 bears the Cysteine persulfide mark.

This sequence belongs to the HCP family. It depends on [4Fe-4S] cluster as a cofactor. Hybrid [4Fe-2O-2S] cluster is required as a cofactor.

It is found in the cytoplasm. It catalyses the reaction A + NH4(+) + H2O = hydroxylamine + AH2 + H(+). Its function is as follows. Catalyzes the reduction of hydroxylamine to form NH(3) and H(2)O. The chain is Hydroxylamine reductase from Geobacter metallireducens (strain ATCC 53774 / DSM 7210 / GS-15).